A 90-amino-acid polypeptide reads, in one-letter code: uncharacterized protein (90 aa).

The helical transmembrane segment at 15–34 (HVLAISTFIATAAVASYFTT) threads the bilayer. Positions 34–65 (TKPKTKNEGKNSSALSQQKSGESSNSDAMGKD) are disordered. Residues 43 to 60 (KNSSALSQQKSGESSNSD) are compositionally biased toward polar residues. A glycan (N-linked (GlcNAc...) asparagine) is linked at Asn-44.

It localises to the mitochondrion membrane. This is an uncharacterized protein from Saccharomyces cerevisiae (strain ATCC 204508 / S288c) (Baker's yeast).